A 148-amino-acid chain; its full sequence is D-aminoacyl-tRNA deacylase (148 aa).

The short motif at 137 to 138 is the Gly-cisPro motif, important for rejection of L-amino acids element; the sequence is GP.

It belongs to the DTD family. As to quaternary structure, homodimer.

Its subcellular location is the cytoplasm. It catalyses the reaction glycyl-tRNA(Ala) + H2O = tRNA(Ala) + glycine + H(+). The enzyme catalyses a D-aminoacyl-tRNA + H2O = a tRNA + a D-alpha-amino acid + H(+). An aminoacyl-tRNA editing enzyme that deacylates mischarged D-aminoacyl-tRNAs. Also deacylates mischarged glycyl-tRNA(Ala), protecting cells against glycine mischarging by AlaRS. Acts via tRNA-based rather than protein-based catalysis; rejects L-amino acids rather than detecting D-amino acids in the active site. By recycling D-aminoacyl-tRNA to D-amino acids and free tRNA molecules, this enzyme counteracts the toxicity associated with the formation of D-aminoacyl-tRNA entities in vivo and helps enforce protein L-homochirality. In Lactiplantibacillus plantarum (strain ATCC BAA-793 / NCIMB 8826 / WCFS1) (Lactobacillus plantarum), this protein is D-aminoacyl-tRNA deacylase.